Consider the following 64-residue polypeptide: Protein translocase subunit SecE (64 aa).

A helical transmembrane segment spans residues 35-55 (LVVLGTVAFITVFFAVVDYGI).

This sequence belongs to the SecE/SEC61-gamma family. As to quaternary structure, component of the Sec protein translocase complex. Heterotrimer consisting of SecY, SecE and SecG subunits. The heterotrimers can form oligomers, although 1 heterotrimer is thought to be able to translocate proteins. Interacts with the ribosome. Interacts with SecDF, and other proteins may be involved. Interacts with SecA.

It is found in the cell membrane. In terms of biological role, essential subunit of the Sec protein translocation channel SecYEG. Clamps together the 2 halves of SecY. May contact the channel plug during translocation. The sequence is that of Protein translocase subunit SecE from Halalkalibacterium halodurans (strain ATCC BAA-125 / DSM 18197 / FERM 7344 / JCM 9153 / C-125) (Bacillus halodurans).